The following is a 941-amino-acid chain: Isoleucine--tRNA ligase (941 aa).

Residues 58 to 68 (PYANGDIHIGH) carry the 'HIGH' region motif. Residue glutamate 563 participates in L-isoleucyl-5'-AMP binding. Positions 604–608 (KMSKS) match the 'KMSKS' region motif. Lysine 607 provides a ligand contact to ATP. Positions 904, 907, 924, and 927 each coordinate Zn(2+).

Belongs to the class-I aminoacyl-tRNA synthetase family. IleS type 1 subfamily. As to quaternary structure, monomer. Requires Zn(2+) as cofactor.

Its subcellular location is the cytoplasm. The catalysed reaction is tRNA(Ile) + L-isoleucine + ATP = L-isoleucyl-tRNA(Ile) + AMP + diphosphate. Functionally, catalyzes the attachment of isoleucine to tRNA(Ile). As IleRS can inadvertently accommodate and process structurally similar amino acids such as valine, to avoid such errors it has two additional distinct tRNA(Ile)-dependent editing activities. One activity is designated as 'pretransfer' editing and involves the hydrolysis of activated Val-AMP. The other activity is designated 'posttransfer' editing and involves deacylation of mischarged Val-tRNA(Ile). The chain is Isoleucine--tRNA ligase from Halorhodospira halophila (strain DSM 244 / SL1) (Ectothiorhodospira halophila (strain DSM 244 / SL1)).